The primary structure comprises 54 residues: Sperm protamine P3 (54 aa).

The disordered stretch occupies residues 1–54; that stretch reads RRRRRRGKGKGGKKKKGKKRRRRGRKGKGKGKKKGKRKGKRGGKRRRRRRKGKK.

In terms of tissue distribution, gonads.

The protein resides in the nucleus. The protein localises to the chromosome. Functionally, protamines substitute for histones in the chromatin of sperm during the haploid phase of spermatogenesis. They compact sperm DNA into a highly condensed, stable and inactive complex. This is Sperm protamine P3 from Bolinus brandaris (Purple dye murex).